Here is a 179-residue protein sequence, read N- to C-terminus: uncharacterized protein (179 aa).

The first 26 residues, 1-26 (MKKNMILFFGILKKLLICILKMEIKC), serve as a signal peptide directing secretion.

This is an uncharacterized protein from Acheta domesticus (House cricket).